We begin with the raw amino-acid sequence, 568 residues long: Phenylalanine--tRNA ligase beta subunit (568 aa).

The region spanning 278–353 (LTPKSFEVEL…IAYGYNEIEP (76 aa)) is the B5 domain. The Mg(2+) site is built by Asp-331, Asp-337, Glu-340, and Asp-341.

This sequence belongs to the phenylalanyl-tRNA synthetase beta subunit family. Type 2 subfamily. Tetramer of two alpha and two beta subunits. It depends on Mg(2+) as a cofactor.

The protein resides in the cytoplasm. It catalyses the reaction tRNA(Phe) + L-phenylalanine + ATP = L-phenylalanyl-tRNA(Phe) + AMP + diphosphate + H(+). This Thermococcus gammatolerans (strain DSM 15229 / JCM 11827 / EJ3) protein is Phenylalanine--tRNA ligase beta subunit.